The following is a 295-amino-acid chain: Pyridoxal 5'-phosphate synthase subunit PdxS (295 aa).

Residue Asp25 participates in D-ribose 5-phosphate binding. The Schiff-base intermediate with D-ribose 5-phosphate role is filled by Lys82. Gly154 is a binding site for D-ribose 5-phosphate. D-glyceraldehyde 3-phosphate is bound at residue Arg166. D-ribose 5-phosphate is bound by residues Gly215 and 236–237; that span reads GS.

It belongs to the PdxS/SNZ family. In the presence of PdxT, forms a dodecamer of heterodimers.

The enzyme catalyses aldehydo-D-ribose 5-phosphate + D-glyceraldehyde 3-phosphate + L-glutamine = pyridoxal 5'-phosphate + L-glutamate + phosphate + 3 H2O + H(+). Its pathway is cofactor biosynthesis; pyridoxal 5'-phosphate biosynthesis. In terms of biological role, catalyzes the formation of pyridoxal 5'-phosphate from ribose 5-phosphate (RBP), glyceraldehyde 3-phosphate (G3P) and ammonia. The ammonia is provided by the PdxT subunit. Can also use ribulose 5-phosphate and dihydroxyacetone phosphate as substrates, resulting from enzyme-catalyzed isomerization of RBP and G3P, respectively. The sequence is that of Pyridoxal 5'-phosphate synthase subunit PdxS from Listeria welshimeri serovar 6b (strain ATCC 35897 / DSM 20650 / CCUG 15529 / CIP 8149 / NCTC 11857 / SLCC 5334 / V8).